Reading from the N-terminus, the 198-residue chain is Interferon gamma (198 aa).

Residues 1 to 23 (MMVSTARAVVCLSLCLCVCQVRG) form the signal peptide. N-linked (GlcNAc...) asparagine glycosylation is found at asparagine 31, asparagine 42, and asparagine 174. The interval 173-198 (SNNTKMQRRRRRRRRQARKVKTPTRA) is disordered. The span at 178-198 (MQRRRRRRRRQARKVKTPTRA) shows a compositional bias: basic residues.

It belongs to the type II (or gamma) interferon family. As to quaternary structure, homodimer.

Its subcellular location is the secreted. Its function is as follows. Cytokine which binds to interferon gamma receptor 1 (ifngr1). Also binds with lower affinity to interferon gamma receptor 1-like (ifngr1l). Has activating effects on macrophages and neutrophils. In Paralichthys olivaceus (Bastard halibut), this protein is Interferon gamma.